The sequence spans 240 residues: T4 protein (240 aa).

Belongs to the poxviruses B9 family.

The polypeptide is T4 protein (Sheeppox virus (strain InS-1) (SPPV)).